A 399-amino-acid chain; its full sequence is Elongation factor Tu (399 aa).

The region spanning 10–204 (KPHVNIGTIG…AVDSSIPEPE (195 aa)) is the tr-type G domain. Residues 19-26 (GHVDHGKT) are G1. GTP is bound at residue 19–26 (GHVDHGKT). A Mg(2+)-binding site is contributed by Thr-26. The tract at residues 60-64 (GITIN) is G2. Positions 81–84 (DCPG) are G3. GTP-binding positions include 81–85 (DCPGH) and 136–139 (NKCD). The G4 stretch occupies residues 136 to 139 (NKCD). Residues 174-176 (SGL) form a G5 region.

Belongs to the TRAFAC class translation factor GTPase superfamily. Classic translation factor GTPase family. EF-Tu/EF-1A subfamily. Monomer.

The protein resides in the cytoplasm. It carries out the reaction GTP + H2O = GDP + phosphate + H(+). GTP hydrolase that promotes the GTP-dependent binding of aminoacyl-tRNA to the A-site of ribosomes during protein biosynthesis. This is Elongation factor Tu from Synechococcus sp. (strain CC9605).